Consider the following 88-residue polypeptide: Apolipoprotein C-I (88 aa).

An N-terminal signal peptide occupies residues 1-26; it reads MRLILSLPVLAVVLAMVLEGPAPAQA.

Belongs to the apolipoprotein C1 family.

Its subcellular location is the secreted. In terms of biological role, inhibitor of lipoprotein binding to the low density lipoprotein (LDL) receptor, LDL receptor-related protein, and very low density lipoprotein (VLDL) receptor. Associates with high density lipoproteins (HDL) and the triacylglycerol-rich lipoproteins in the plasma and makes up about 10% of the protein of the VLDL and 2% of that of HDL. Appears to interfere directly with fatty acid uptake and is also the major plasma inhibitor of cholesteryl ester transfer protein (CETP). Binds free fatty acids and reduces their intracellular esterification. Modulates the interaction of APOE with beta-migrating VLDL and inhibits binding of beta-VLDL to the LDL receptor-related protein. This is Apolipoprotein C-I (APOC1) from Cynopterus brachyotis (Lesser short-nosed fruit bat).